The primary structure comprises 269 residues: Nitrite transporter NirC (269 aa).

At 1–29 (MFTDTINKCAANAARIARLSANNPLGFWV) the chain is on the cytoplasmic side. Residues 30 to 46 (SSAMAGAYVGLGIILIF) traverse the membrane as a helical segment. Topologically, residues 47 to 58 (TLGNLLDPSVRP) are extracellular. The chain crosses the membrane as a helical span at residues 59–75 (LVMGATFGIALTLVIIA). The Cytoplasmic segment spans residues 76-107 (GSELFTGHTMFLTLGVKAGTISHGQMWAILPQ). A helical membrane pass occupies residues 108 to 125 (TWLGNLVGSVFVALLYSW). Topologically, residues 126–153 (GGGSLLPVDTSIVHSVALAKTTAPATVL) are extracellular. The helical transmembrane segment at 154-172 (FFKGALCNWLVCLAIWMAI) threads the bilayer. The Cytoplasmic segment spans residues 173-179 (RTEGTAK). Residues 180–195 (FLAIWWCLLAFIASGY) traverse the membrane as a helical segment. Residues 196–230 (EHSVANMTLFALSWFGHHSDAYTLAGIGHNLLWVT) are Extracellular-facing. The helical transmembrane segment at 231-250 (LGNTLSGVVFMGLGYWYATP) threads the bilayer. Residues 251–269 (KSERPAPAKINQPEAAANN) lie on the Cytoplasmic side of the membrane.

This sequence belongs to the FNT transporter (TC 1.A.16) family.

It localises to the cell inner membrane. Its function is as follows. Catalyzes nitrite uptake and nitrite export across the cytoplasmic membrane. This Salmonella typhimurium (strain LT2 / SGSC1412 / ATCC 700720) protein is Nitrite transporter NirC (nirC).